We begin with the raw amino-acid sequence, 352 residues long: O(6)-methylguanine-induced apoptosis 2 (352 aa).

7 STPGR repeats span residues 80 to 90 (NPGPGAYNVAR), 124 to 139 (PAPN…FSKK), 165 to 171 (PAPNQYS), 205 to 235 (GPSP…KTSR), 244 to 263 (NPGP…KKII), 286 to 295 (PGPGHYDIVD), and 325 to 335 (LPGPGAYHPEI).

It belongs to the STPG1 family.

The protein resides in the cytoplasm. The protein localises to the nucleus. Functionally, may positively contribute to the induction of apoptosis triggered by O(6)-methylguanine. The polypeptide is O(6)-methylguanine-induced apoptosis 2 (stpg1) (Xenopus laevis (African clawed frog)).